Here is a 111-residue protein sequence, read N- to C-terminus: Putative single-stranded DNA-binding protein ycf41 (111 aa).

The SSB domain occupies 1 to 98 (MNSCTLLVQI…FSTSRIFKYK (98 aa)).

It is found in the plastid. The protein localises to the chloroplast. The polypeptide is Putative single-stranded DNA-binding protein ycf41 (ycf41) (Pyropia yezoensis (Susabi-nori)).